The primary structure comprises 376 residues: GDSL esterase/lipase 2 (376 aa).

Residues 1–25 (MENSRSTLIIFFAYTTIILIGSINC) form the signal peptide. An N-linked (GlcNAc...) asparagine glycan is attached at asparagine 36. Residue serine 46 is the Nucleophile of the active site. 2 N-linked (GlcNAc...) asparagine glycosylation sites follow: asparagine 186 and asparagine 205. Residues aspartate 340 and histidine 343 contribute to the active site. The N-linked (GlcNAc...) asparagine glycan is linked to asparagine 362.

It belongs to the 'GDSL' lipolytic enzyme family. Expressed seedlings, roots and stems.

It is found in the secreted. Its function is as follows. Involved in the resistance to the necrotropic bacteria Erwinia carotovora, probably via negative regulation of auxin signaling. Possesses lipase and antimicrobial activities, inhibiting germination of fungal spores (e.g. Alternaria brassicicola). The protein is GDSL esterase/lipase 2 (GLIP2) of Arabidopsis thaliana (Mouse-ear cress).